Reading from the N-terminus, the 289-residue chain is MLKNLFRKTKYITVSQKNIENYKRENTPTIPDGMWVKCNKCGEILYQNDLEKNYMACNLCGNHFRIGAKERIKYLFDKDTFKEWDYKVKTENPLSFKGYDEKIENIKEETNLSEAVTTGKGKIADMEVVVCIMDSKFMMGSMGSVVGEKITRAIERAIELRLPVIIFTVSGGARMQEGILSLMQMAKVSSALAKLDEEGLLYICVLTDPTTGGVTASFAMLGDIILAEPDALIGFAGKRVIEQTINEKLPEDFQKSEFLLEHGFIDKIVPRSDLRKVLAKLINMHKNSF.

The CoA carboxyltransferase N-terminal domain occupies 34 to 289 (MWVKCNKCGE…KLINMHKNSF (256 aa)). Cys-38, Cys-41, Cys-57, and Cys-60 together coordinate Zn(2+). The C4-type zinc finger occupies 38–60 (CNKCGEILYQNDLEKNYMACNLC).

Belongs to the AccD/PCCB family. Acetyl-CoA carboxylase is a heterohexamer composed of biotin carboxyl carrier protein (AccB), biotin carboxylase (AccC) and two subunits each of ACCase subunit alpha (AccA) and ACCase subunit beta (AccD). Zn(2+) serves as cofactor.

Its subcellular location is the cytoplasm. It catalyses the reaction N(6)-carboxybiotinyl-L-lysyl-[protein] + acetyl-CoA = N(6)-biotinyl-L-lysyl-[protein] + malonyl-CoA. The protein operates within lipid metabolism; malonyl-CoA biosynthesis; malonyl-CoA from acetyl-CoA: step 1/1. Its function is as follows. Component of the acetyl coenzyme A carboxylase (ACC) complex. Biotin carboxylase (BC) catalyzes the carboxylation of biotin on its carrier protein (BCCP) and then the CO(2) group is transferred by the transcarboxylase to acetyl-CoA to form malonyl-CoA. The chain is Acetyl-coenzyme A carboxylase carboxyl transferase subunit beta from Clostridium botulinum (strain Loch Maree / Type A3).